A 255-amino-acid polypeptide reads, in one-letter code: Probable ubiquitin carboxyl-terminal hydrolase (255 aa).

The UCH catalytic domain occupies 13 to 237 (NWIPLEANPE…IRFNLMGLVK (225 aa)). The segment at 16-21 (PLEANP) is interaction with ubiquitin. Cys-103 functions as the Nucleophile in the catalytic mechanism. Catalysis depends on His-177, which acts as the Proton donor. The segment at 227 to 232 (EIRFNL) is interaction with ubiquitin. A disordered region spans residues 235–255 (LVKKPNEESEEEEEKEKEETK). A compositionally biased stretch (acidic residues) spans 242-255 (ESEEEEEKEKEETK).

Belongs to the peptidase C12 family.

It is found in the cytoplasm. The enzyme catalyses Thiol-dependent hydrolysis of ester, thioester, amide, peptide and isopeptide bonds formed by the C-terminal Gly of ubiquitin (a 76-residue protein attached to proteins as an intracellular targeting signal).. Ubiquitin-protein hydrolase is involved both in the processing of ubiquitin precursors and of ubiquitinated proteins. This enzyme is a thiol protease that recognizes and hydrolyzes a peptide bond at the C-terminal glycine of either ubiquitin or nedd8. The polypeptide is Probable ubiquitin carboxyl-terminal hydrolase (uch1) (Dictyostelium discoideum (Social amoeba)).